Reading from the N-terminus, the 652-residue chain is DNA ligase (652 aa).

NAD(+) contacts are provided by residues 29–33, 78–79, and glutamate 107; these read DSEYD and SL. Lysine 109 serves as the catalytic N6-AMP-lysine intermediate. Positions 130, 164, 278, and 302 each coordinate NAD(+). Zn(2+)-binding residues include cysteine 395, cysteine 398, cysteine 413, and cysteine 418. The region spanning 577–652 is the BRCT domain; it reads DRQAELFGLT…IEDEDWLLNL (76 aa).

It belongs to the NAD-dependent DNA ligase family. LigA subfamily. Requires Mg(2+) as cofactor. The cofactor is Mn(2+).

The enzyme catalyses NAD(+) + (deoxyribonucleotide)n-3'-hydroxyl + 5'-phospho-(deoxyribonucleotide)m = (deoxyribonucleotide)n+m + AMP + beta-nicotinamide D-nucleotide.. Functionally, DNA ligase that catalyzes the formation of phosphodiester linkages between 5'-phosphoryl and 3'-hydroxyl groups in double-stranded DNA using NAD as a coenzyme and as the energy source for the reaction. It is essential for DNA replication and repair of damaged DNA. This chain is DNA ligase, found in Streptococcus equi subsp. zooepidemicus (strain MGCS10565).